The primary structure comprises 78 residues: D-alanyl carrier protein (78 aa).

The region spanning 1 to 77 (MDLKEQIVEI…KVVAKVESLI (77 aa)) is the Carrier domain. The residue at position 35 (Ser35) is an O-(pantetheine 4'-phosphoryl)serine.

Belongs to the DltC family. 4'-phosphopantetheine is transferred from CoA to a specific serine of apo-DCP.

It localises to the cytoplasm. Its pathway is cell wall biogenesis; lipoteichoic acid biosynthesis. Functionally, carrier protein involved in the D-alanylation of lipoteichoic acid (LTA). The loading of thioester-linked D-alanine onto DltC is catalyzed by D-alanine--D-alanyl carrier protein ligase DltA. The DltC-carried D-alanyl group is further transferred to cell membrane phosphatidylglycerol (PG) by forming an ester bond, probably catalyzed by DltD. D-alanylation of LTA plays an important role in modulating the properties of the cell wall in Gram-positive bacteria, influencing the net charge of the cell wall. The chain is D-alanyl carrier protein from Leuconostoc mesenteroides subsp. mesenteroides (strain ATCC 8293 / DSM 20343 / BCRC 11652 / CCM 1803 / JCM 6124 / NCDO 523 / NBRC 100496 / NCIMB 8023 / NCTC 12954 / NRRL B-1118 / 37Y).